The primary structure comprises 388 residues: Succinate--CoA ligase [ADP-forming] subunit beta (388 aa).

One can recognise an ATP-grasp domain in the interval 9 to 244 (KSLFAEYGLP…PSQDDAREAH (236 aa)). Residues K46, 53–55 (GRG), E99, T102, and E107 each bind ATP. 2 residues coordinate Mg(2+): N199 and D213. Substrate-binding positions include N264 and 321-323 (GIV).

This sequence belongs to the succinate/malate CoA ligase beta subunit family. As to quaternary structure, heterotetramer of two alpha and two beta subunits. It depends on Mg(2+) as a cofactor.

The catalysed reaction is succinate + ATP + CoA = succinyl-CoA + ADP + phosphate. It carries out the reaction GTP + succinate + CoA = succinyl-CoA + GDP + phosphate. It functions in the pathway carbohydrate metabolism; tricarboxylic acid cycle; succinate from succinyl-CoA (ligase route): step 1/1. Functionally, succinyl-CoA synthetase functions in the citric acid cycle (TCA), coupling the hydrolysis of succinyl-CoA to the synthesis of either ATP or GTP and thus represents the only step of substrate-level phosphorylation in the TCA. The beta subunit provides nucleotide specificity of the enzyme and binds the substrate succinate, while the binding sites for coenzyme A and phosphate are found in the alpha subunit. This is Succinate--CoA ligase [ADP-forming] subunit beta from Shewanella sp. (strain MR-4).